The sequence spans 535 residues: Cytochrome c oxidase subunit 1 (535 aa).

Residues 15-37 form a helical membrane-spanning segment; it reads IAILYFIFSTFCGLAGTAMSFII. Residues Glu40, Ala43, and Gly45 each coordinate Ca(2+). 5 consecutive transmembrane segments (helical) span residues 58–80, 147–169, 190–212, 238–260, and 267–289; these read VLVTGHTILMVFFLVMPMLIGGF, LAIFSLHLTTISSLLGTINFIVT, ILITAVMLLMSLPVLSAGVTMLL, WFFGHPEVYIMIVPTFGMMSHIV, and PVFGEISMIYTMGSISLLGFLVW. A Fe(II)-heme a-binding site is contributed by His63. His242 is a binding site for Cu cation. The 1'-histidyl-3'-tyrosine (His-Tyr) cross-link spans 242-246; it reads HPEVY. Tyr246 is an O2 binding site. Cu cation contacts are provided by His291 and His292. 2 consecutive transmembrane segments (helical) span residues 304–326 and 339–361; these read AYFTSATMIITIPTSIKVFSWLT and MLYTLSFLFLFTVGGLTGVVLAN. His369 and Asp370 together coordinate Mg(2+). 2 helical membrane-spanning segments follow: residues 376–398 and 415–437; these read THFHYVLSLGAVFSMFAGYYYWS and FWLIFLGTNIIFFPMHFLGINGM. Position 377 (His377) interacts with heme a3. His379 contributes to the Fe(II)-heme a binding site. Pro442 serves as a coordination point for Ca(2+). A helical transmembrane segment spans residues 452-474; that stretch reads NLVSSFGSMMTIMSLMLFTYIIY.

This sequence belongs to the heme-copper respiratory oxidase family. Component of the cytochrome c oxidase (complex IV, CIV), a multisubunit enzyme composed of a catalytic core of 3 subunits and several supernumerary subunits. The complex exists as a monomer or a dimer and forms supercomplexes (SCs) in the inner mitochondrial membrane with ubiquinol-cytochrome c oxidoreductase (cytochrome b-c1 complex, complex III, CIII). It depends on heme as a cofactor. The cofactor is Cu cation.

Its subcellular location is the mitochondrion inner membrane. The enzyme catalyses 4 Fe(II)-[cytochrome c] + O2 + 8 H(+)(in) = 4 Fe(III)-[cytochrome c] + 2 H2O + 4 H(+)(out). It participates in energy metabolism; oxidative phosphorylation. Functionally, component of the cytochrome c oxidase, the last enzyme in the mitochondrial electron transport chain which drives oxidative phosphorylation. The respiratory chain contains 3 multisubunit complexes succinate dehydrogenase (complex II, CII), ubiquinol-cytochrome c oxidoreductase (cytochrome b-c1 complex, complex III, CIII) and cytochrome c oxidase (complex IV, CIV), that cooperate to transfer electrons derived from NADH and succinate to molecular oxygen, creating an electrochemical gradient over the inner membrane that drives transmembrane transport and the ATP synthase. Cytochrome c oxidase is the component of the respiratory chain that catalyzes the reduction of oxygen to water. Electrons originating from reduced cytochrome c in the intermembrane space (IMS) are transferred via the dinuclear copper A center (CU(A)) of subunit 2 and heme A of subunit 1 to the active site in subunit 1, a binuclear center (BNC) formed by heme A3 and copper B (CU(B)). The BNC reduces molecular oxygen to 2 water molecules using 4 electrons from cytochrome c in the IMS and 4 protons from the mitochondrial matrix. This chain is Cytochrome c oxidase subunit 1 (COX1), found in Eremothecium gossypii (strain ATCC 10895 / CBS 109.51 / FGSC 9923 / NRRL Y-1056) (Yeast).